A 453-amino-acid chain; its full sequence is Autophagy-related protein 21 (453 aa).

The stretch at 4–137 is one WD 1 repeat; that stretch reads LRFNQDASCC…NDQIFIYDIS (134 aa). Positions 177-207 are disordered; that stretch reads GNELDRIRSKSNNNNDQTNSDNGRSRTYSIN. Low complexity predominate over residues 187-198; it reads SNNNNDQTNSDN. 2 WD repeats span residues 252–347 and 419–453; these read NLKP…RTDD and FDNK…SHFI. Positions 310–314 match the L/FRRG motif motif; it reads FRRGS.

Belongs to the WD repeat PROPPIN family.

The protein resides in the cytoplasm. The protein localises to the membrane. It is found in the vacuole membrane. Functionally, required for cytoplasm to vacuole transport (Cvt) vesicles formation and mitophagy. Involved in binding of phosphatidylethanolamine to ATG8 and in recruitment of ATG8 and ATG5 to the pre-autophagosomal structure. Protects ATG8 from ARG4-mediated cleavage. This chain is Autophagy-related protein 21 (ATG21), found in Candida glabrata (strain ATCC 2001 / BCRC 20586 / JCM 3761 / NBRC 0622 / NRRL Y-65 / CBS 138) (Yeast).